The sequence spans 210 residues: Glutathione S-transferase 4 (210 aa).

In terms of domain architecture, GST N-terminal spans 1–80 (MDFYYLPLSA…YLVEKYGKQD (80 aa)). Glutathione contacts are provided by residues S9, 50–52 (HTI), and 64–66 (ESR). One can recognise a GST C-terminal domain in the interval 87–208 (CPKKRALINQ…AGALEMKTLI (122 aa)).

The protein belongs to the GST superfamily. Theta family. As to quaternary structure, homodimer.

It carries out the reaction RX + glutathione = an S-substituted glutathione + a halide anion + H(+). In terms of biological role, conjugation of reduced glutathione to a wide number of exogenous and endogenous hydrophobic electrophiles. This Musca domestica (House fly) protein is Glutathione S-transferase 4 (Gst4).